A 215-amino-acid chain; its full sequence is Probable phosphoglycerate mutase GpmB (215 aa).

Residues 8-15, 21-22, arginine 58, arginine 60, 82-85, 104-105, and 151-152 contribute to the substrate site; these read RHGETQWN, QG, ELNM, RR, and GI. The Tele-phosphohistidine intermediate role is filled by histidine 9. Residue glutamate 82 is the Proton donor/acceptor of the active site.

This sequence belongs to the phosphoglycerate mutase family. GpmB subfamily.

It carries out the reaction (2R)-2-phosphoglycerate = (2R)-3-phosphoglycerate. It participates in carbohydrate degradation; glycolysis; pyruvate from D-glyceraldehyde 3-phosphate: step 3/5. This is Probable phosphoglycerate mutase GpmB from Escherichia coli O1:K1 / APEC.